A 97-amino-acid chain; its full sequence is Integration host factor subunit alpha (97 aa).

The disordered stretch occupies residues 50–71; sequence FGNFTLRDKPQRPGRNPKTGEE.

Belongs to the bacterial histone-like protein family. Heterodimer of an alpha and a beta chain.

This protein is one of the two subunits of integration host factor, a specific DNA-binding protein that functions in genetic recombination as well as in transcriptional and translational control. The sequence is that of Integration host factor subunit alpha from Legionella pneumophila (strain Paris).